Consider the following 563-residue polypeptide: Arginine--tRNA ligase (563 aa).

A 'HIGH' region motif is present at residues 134–144 (ANPTGLLHMGN).

The protein belongs to the class-I aminoacyl-tRNA synthetase family. Monomer.

The protein localises to the cytoplasm. It catalyses the reaction tRNA(Arg) + L-arginine + ATP = L-arginyl-tRNA(Arg) + AMP + diphosphate. The protein is Arginine--tRNA ligase of Heliobacterium modesticaldum (strain ATCC 51547 / Ice1).